Here is a 238-residue protein sequence, read N- to C-terminus: Ribonuclease PH (238 aa).

Phosphate contacts are provided by residues R86 and 124-126 (GTR).

Belongs to the RNase PH family. As to quaternary structure, homohexameric ring arranged as a trimer of dimers.

The enzyme catalyses tRNA(n+1) + phosphate = tRNA(n) + a ribonucleoside 5'-diphosphate. In terms of biological role, phosphorolytic 3'-5' exoribonuclease that plays an important role in tRNA 3'-end maturation. Removes nucleotide residues following the 3'-CCA terminus of tRNAs; can also add nucleotides to the ends of RNA molecules by using nucleoside diphosphates as substrates, but this may not be physiologically important. Probably plays a role in initiation of 16S rRNA degradation (leading to ribosome degradation) during starvation. This Mannheimia haemolytica (Pasteurella haemolytica) protein is Ribonuclease PH.